We begin with the raw amino-acid sequence, 321 residues long: Ribose-phosphate pyrophosphokinase (321 aa).

ATP contacts are provided by residues 44-46 and 103-104; these read DGE and RQ. Residues His137 and Asp179 each coordinate Mg(2+). The active site involves Lys202. D-ribose 5-phosphate-binding positions include Arg204, Asp228, and 232-236; that span reads DTAGT.

Belongs to the ribose-phosphate pyrophosphokinase family. Class I subfamily. Homohexamer. The cofactor is Mg(2+).

The protein resides in the cytoplasm. It carries out the reaction D-ribose 5-phosphate + ATP = 5-phospho-alpha-D-ribose 1-diphosphate + AMP + H(+). It participates in metabolic intermediate biosynthesis; 5-phospho-alpha-D-ribose 1-diphosphate biosynthesis; 5-phospho-alpha-D-ribose 1-diphosphate from D-ribose 5-phosphate (route I): step 1/1. Involved in the biosynthesis of the central metabolite phospho-alpha-D-ribosyl-1-pyrophosphate (PRPP) via the transfer of pyrophosphoryl group from ATP to 1-hydroxyl of ribose-5-phosphate (Rib-5-P). This is Ribose-phosphate pyrophosphokinase from Staphylococcus aureus (strain COL).